Reading from the N-terminus, the 329-residue chain is DNA-directed RNA polymerase subunit alpha (329 aa).

Residues 1–235 are alpha N-terminal domain (alpha-NTD); the sequence is MQGFVEDFLK…QQLEAFVDLR (235 aa). Residues 249 to 329 form an alpha C-terminal domain (alpha-CTD) region; sequence FEPVLLRPVD…NWPPKSLLED (81 aa).

Belongs to the RNA polymerase alpha chain family. Homodimer. The RNAP catalytic core consists of 2 alpha, 1 beta, 1 beta' and 1 omega subunit. When a sigma factor is associated with the core the holoenzyme is formed, which can initiate transcription.

The enzyme catalyses RNA(n) + a ribonucleoside 5'-triphosphate = RNA(n+1) + diphosphate. In terms of biological role, DNA-dependent RNA polymerase catalyzes the transcription of DNA into RNA using the four ribonucleoside triphosphates as substrates. The chain is DNA-directed RNA polymerase subunit alpha from Buchnera aphidicola subsp. Cinara cedri (strain Cc).